Here is a 276-residue protein sequence, read N- to C-terminus: Ribosomal RNA small subunit methyltransferase A (276 aa).

Residues Asn27, Leu29, Gly54, Glu75, Asp101, and Asn122 each contribute to the S-adenosyl-L-methionine site.

It belongs to the class I-like SAM-binding methyltransferase superfamily. rRNA adenine N(6)-methyltransferase family. RsmA subfamily.

The protein resides in the cytoplasm. It carries out the reaction adenosine(1518)/adenosine(1519) in 16S rRNA + 4 S-adenosyl-L-methionine = N(6)-dimethyladenosine(1518)/N(6)-dimethyladenosine(1519) in 16S rRNA + 4 S-adenosyl-L-homocysteine + 4 H(+). Its function is as follows. Specifically dimethylates two adjacent adenosines (A1518 and A1519) in the loop of a conserved hairpin near the 3'-end of 16S rRNA in the 30S particle. May play a critical role in biogenesis of 30S subunits. This Brucella abortus (strain S19) protein is Ribosomal RNA small subunit methyltransferase A.